Here is a 357-residue protein sequence, read N- to C-terminus: Holliday junction branch migration complex subunit RuvB (357 aa).

Residues 1-15 (MAIQSDSLSSLPDSP) are compositionally biased toward low complexity. The disordered stretch occupies residues 1–30 (MAIQSDSLSSLPDSPRIVAPQPVSPNEESI). Residues 13-195 (DSPRIVAPQP…FGIVSRLEFY (183 aa)) form a large ATPase domain (RuvB-L) region. ATP-binding positions include leucine 34, arginine 35, glycine 76, lysine 79, threonine 80, threonine 81, 142-144 (EDF), arginine 185, tyrosine 195, and arginine 232. Threonine 80 is a binding site for Mg(2+). Residues 196-266 (NTDELARIVT…AAGRALAMLD (71 aa)) are small ATPAse domain (RuvB-S). Residues 269-357 (PQGLDVMDRK…SGGTGELFSK (89 aa)) form a head domain (RuvB-H) region. The DNA site is built by arginine 305, arginine 324, and arginine 329.

The protein belongs to the RuvB family. As to quaternary structure, homohexamer. Forms an RuvA(8)-RuvB(12)-Holliday junction (HJ) complex. HJ DNA is sandwiched between 2 RuvA tetramers; dsDNA enters through RuvA and exits via RuvB. An RuvB hexamer assembles on each DNA strand where it exits the tetramer. Each RuvB hexamer is contacted by two RuvA subunits (via domain III) on 2 adjacent RuvB subunits; this complex drives branch migration. In the full resolvosome a probable DNA-RuvA(4)-RuvB(12)-RuvC(2) complex forms which resolves the HJ.

It localises to the cytoplasm. The catalysed reaction is ATP + H2O = ADP + phosphate + H(+). Its function is as follows. The RuvA-RuvB-RuvC complex processes Holliday junction (HJ) DNA during genetic recombination and DNA repair, while the RuvA-RuvB complex plays an important role in the rescue of blocked DNA replication forks via replication fork reversal (RFR). RuvA specifically binds to HJ cruciform DNA, conferring on it an open structure. The RuvB hexamer acts as an ATP-dependent pump, pulling dsDNA into and through the RuvAB complex. RuvB forms 2 homohexamers on either side of HJ DNA bound by 1 or 2 RuvA tetramers; 4 subunits per hexamer contact DNA at a time. Coordinated motions by a converter formed by DNA-disengaged RuvB subunits stimulates ATP hydrolysis and nucleotide exchange. Immobilization of the converter enables RuvB to convert the ATP-contained energy into a lever motion, pulling 2 nucleotides of DNA out of the RuvA tetramer per ATP hydrolyzed, thus driving DNA branch migration. The RuvB motors rotate together with the DNA substrate, which together with the progressing nucleotide cycle form the mechanistic basis for DNA recombination by continuous HJ branch migration. Branch migration allows RuvC to scan DNA until it finds its consensus sequence, where it cleaves and resolves cruciform DNA. In Bordetella parapertussis (strain 12822 / ATCC BAA-587 / NCTC 13253), this protein is Holliday junction branch migration complex subunit RuvB.